A 162-amino-acid chain; its full sequence is Large ribosomal subunit protein uL22c (162 aa).

Belongs to the universal ribosomal protein uL22 family. In terms of assembly, part of the 50S ribosomal subunit.

It is found in the plastid. The protein resides in the chloroplast. Its function is as follows. This protein binds specifically to 23S rRNA. In terms of biological role, the globular domain of the protein is located near the polypeptide exit tunnel on the outside of the subunit, while an extended beta-hairpin is found that lines the wall of the exit tunnel in the center of the 70S ribosome. The sequence is that of Large ribosomal subunit protein uL22c (rpl22) from Cucumis sativus (Cucumber).